A 620-amino-acid chain; its full sequence is Cryptochrome-1 (620 aa).

The Photolyase/cryptochrome alpha/beta domain maps to 3–132 (VNAVHWFRKG…EVIVRISHTL (130 aa)). Short sequence motifs (LIR) lie at residues 50–54 (NRWRF), 82–87 (DVFPRL), and 151–156 (KRFQTL). S252 contributes to the FAD binding site. 4 short sequence motifs (LIR) span residues 255 to 260 (LRFGCL), 271 to 276 (DLYKKV), 285 to 290 (SLYGQL), and 335 to 339 (TGFPW). Q289 lines the FAD pocket. An FAD-binding site is contributed by H355. Positions 379 to 384 (KVFEEL) match the LIR 8 motif. 387-389 (DAD) contacts FAD. 5 consecutive short sequence motifs (LIR) follow at residues 395–400 (GSWMWL), 411–416 (HCYCPV), 430–435 (RRYLPV), 486–491 (QIYQQL), and 492–497 (SRYRGL). The interval 592-620 (GTGISAGKRPNPEEETQSVGPKVQRQSTN) is disordered.

The protein belongs to the DNA photolyase class-1 family. As to quaternary structure, component of the circadian core oscillator, which includes the CRY proteins, CLOCK or NPAS2, BMAL1 or BMAL2, CSNK1E, and the PER proteins. FAD serves as cofactor. Requires (6R)-5,10-methylene-5,6,7,8-tetrahydrofolate as cofactor. In terms of tissue distribution, expressed in the retina. High levels found in ganglion cells of the retina.

Its subcellular location is the cytoplasm. It is found in the nucleus. Functionally, transcriptional repressor which forms a core component of the circadian clock. The circadian clock, an internal time-keeping system, regulates various physiological processes through the generation of approximately 24 hour circadian rhythms in gene expression, which are translated into rhythms in metabolism and behavior. It is derived from the Latin roots 'circa' (about) and 'diem' (day) and acts as an important regulator of a wide array of physiological functions including metabolism, sleep, body temperature, blood pressure, endocrine, immune, cardiovascular, and renal function. Consists of two major components: the central clock, residing in the suprachiasmatic nucleus (SCN) of the brain, and the peripheral clocks that are present in nearly every tissue and organ system. Both the central and peripheral clocks can be reset by environmental cues, also known as Zeitgebers (German for 'timegivers'). The predominant Zeitgeber for the central clock is light, which is sensed by retina and signals directly to the SCN. The central clock entrains the peripheral clocks through neuronal and hormonal signals, body temperature and feeding-related cues, aligning all clocks with the external light/dark cycle. Circadian rhythms allow an organism to achieve temporal homeostasis with its environment at the molecular level by regulating gene expression to create a peak of protein expression once every 24 hours to control when a particular physiological process is most active with respect to the solar day. Transcription and translation of core clock components (CLOCK, NPAS2, BMAL1, BMAL2, PER1, PER2, PER3, CRY1 and CRY2) plays a critical role in rhythm generation, whereas delays imposed by post-translational modifications (PTMs) are important for determining the period (tau) of the rhythms (tau refers to the period of a rhythm and is the length, in time, of one complete cycle). A diurnal rhythm is synchronized with the day/night cycle, while the ultradian and infradian rhythms have a period shorter and longer than 24 hours, respectively. Disruptions in the circadian rhythms contribute to the pathology of cardiovascular diseases, cancer, metabolic syndromes and aging. A transcription/translation feedback loop (TTFL) forms the core of the molecular circadian clock mechanism. Transcription factors, CLOCK or NPAS2 and BMAL1 or BMAL2, form the positive limb of the feedback loop, act in the form of a heterodimer and activate the transcription of core clock genes and clock-controlled genes (involved in key metabolic processes), harboring E-box elements (5'-CACGTG-3') within their promoters. The core clock genes: PER1/2/3 and CRY1/2 which are transcriptional repressors form the negative limb of the feedback loop and interact with the CLOCK|NPAS2-BMAL1|BMAL2 heterodimer inhibiting its activity and thereby negatively regulating their own expression. This heterodimer also activates nuclear receptors NR1D1, NR1D2, RORA, RORB and RORG, which form a second feedback loop and which activate and repress BMAL1 transcription, respectively. CRY1 and CRY2 have redundant functions but also differential and selective contributions at least in defining the pace of the SCN circadian clock and its circadian transcriptional outputs. More potent transcriptional repressor in cerebellum and liver than CRY2, though more effective in lengthening the period of the SCN oscillator. On its side, CRY2 seems to play a critical role in tuning SCN circadian period by opposing the action of CRY1. With CRY2, is dispensable for circadian rhythm generation but necessary for the development of intercellular networks for rhythm synchrony. Capable of translocating circadian clock core proteins such as PER proteins to the nucleus. Interacts with CLOCK:BMAL1 independently of PER proteins and is found at CLOCK:BMAL1-bound sites, suggesting that CRY may act as a molecular gatekeeper to maintain CLOCK:BMAL1 in a poised and repressed state until the proper time for transcriptional activation. This chain is Cryptochrome-1 (CRY1), found in Sylvia borin (Garden warbler).